Reading from the N-terminus, the 337-residue chain is Holliday junction branch migration complex subunit RuvB (337 aa).

The tract at residues 1–180 (MTRLISADKS…FGVISRLEFY (180 aa)) is large ATPase domain (RuvB-L). Residues Leu-19, Arg-20, Gly-61, Lys-64, Thr-65, Thr-66, 127 to 129 (EDF), Arg-170, Tyr-180, and Arg-217 contribute to the ATP site. Residue Thr-65 coordinates Mg(2+). A small ATPAse domain (RuvB-S) region spans residues 181–251 (THEELAFIIT…VADQALALLE (71 aa)). Residues 254-337 (DMGFDMMDRA…APEPPQGKLF (84 aa)) are head domain (RuvB-H). DNA contacts are provided by Arg-309 and Arg-314.

The protein belongs to the RuvB family. Homohexamer. Forms an RuvA(8)-RuvB(12)-Holliday junction (HJ) complex. HJ DNA is sandwiched between 2 RuvA tetramers; dsDNA enters through RuvA and exits via RuvB. An RuvB hexamer assembles on each DNA strand where it exits the tetramer. Each RuvB hexamer is contacted by two RuvA subunits (via domain III) on 2 adjacent RuvB subunits; this complex drives branch migration. In the full resolvosome a probable DNA-RuvA(4)-RuvB(12)-RuvC(2) complex forms which resolves the HJ.

It is found in the cytoplasm. It catalyses the reaction ATP + H2O = ADP + phosphate + H(+). Functionally, the RuvA-RuvB-RuvC complex processes Holliday junction (HJ) DNA during genetic recombination and DNA repair, while the RuvA-RuvB complex plays an important role in the rescue of blocked DNA replication forks via replication fork reversal (RFR). RuvA specifically binds to HJ cruciform DNA, conferring on it an open structure. The RuvB hexamer acts as an ATP-dependent pump, pulling dsDNA into and through the RuvAB complex. RuvB forms 2 homohexamers on either side of HJ DNA bound by 1 or 2 RuvA tetramers; 4 subunits per hexamer contact DNA at a time. Coordinated motions by a converter formed by DNA-disengaged RuvB subunits stimulates ATP hydrolysis and nucleotide exchange. Immobilization of the converter enables RuvB to convert the ATP-contained energy into a lever motion, pulling 2 nucleotides of DNA out of the RuvA tetramer per ATP hydrolyzed, thus driving DNA branch migration. The RuvB motors rotate together with the DNA substrate, which together with the progressing nucleotide cycle form the mechanistic basis for DNA recombination by continuous HJ branch migration. Branch migration allows RuvC to scan DNA until it finds its consensus sequence, where it cleaves and resolves cruciform DNA. The protein is Holliday junction branch migration complex subunit RuvB of Citrifermentans bemidjiense (strain ATCC BAA-1014 / DSM 16622 / JCM 12645 / Bem) (Geobacter bemidjiensis).